Here is a 167-residue protein sequence, read N- to C-terminus: Endoribonuclease YbeY (167 aa).

Zn(2+) is bound by residues His125, His129, and His135.

This sequence belongs to the endoribonuclease YbeY family. Zn(2+) serves as cofactor.

It is found in the cytoplasm. Its function is as follows. Single strand-specific metallo-endoribonuclease involved in late-stage 70S ribosome quality control and in maturation of the 3' terminus of the 16S rRNA. The chain is Endoribonuclease YbeY from Allorhizobium ampelinum (strain ATCC BAA-846 / DSM 112012 / S4) (Agrobacterium vitis (strain S4)).